The following is a 230-amino-acid chain: Large ribosomal subunit protein uL1 (230 aa).

It belongs to the universal ribosomal protein uL1 family. In terms of assembly, part of the 50S ribosomal subunit.

Its function is as follows. Binds directly to 23S rRNA. The L1 stalk is quite mobile in the ribosome, and is involved in E site tRNA release. In terms of biological role, protein L1 is also a translational repressor protein, it controls the translation of the L11 operon by binding to its mRNA. This Limosilactobacillus reuteri subsp. reuteri (strain JCM 1112) (Lactobacillus reuteri) protein is Large ribosomal subunit protein uL1.